A 477-amino-acid chain; its full sequence is Delayed-rectifier potassium channel regulatory subunit KCNS2 (477 aa).

Residues 1–184 (MTGQSLWDVS…LALDNPGYSV (184 aa)) are Cytoplasmic-facing. Residues 185 to 206 (LSRVFSILSILVVMGSIITMCL) form a helical membrane-spanning segment. Over 207 to 225 (NSLPDFQIPDSQGNPGEDP) the chain is Extracellular. The helical transmembrane segment at 226-248 (RFEIVEHFGIAWFTFELVARFAV) threads the bilayer. The Cytoplasmic segment spans residues 249–259 (APDFLKFFKNA). Residues 260-280 (LNLIDLMSIVPFYITLVVNLV) form a helical membrane-spanning segment. Topologically, residues 281–290 (VESTPTLANL) are extracellular. The chain crosses the membrane as a helical; Voltage-sensor span at residues 291 to 311 (GRVAQVLRLMRIFRILKLARH). Residues 312–326 (STGLRSLGATLKYSY) lie on the Cytoplasmic side of the membrane. A helical transmembrane segment spans residues 327-348 (KEVGLLLLYLSVGISIFSVVAY). Residues 349-361 (TIEKEENEGLATI) lie on the Extracellular side of the membrane. The segment at residues 362-373 (PACWWWATVSMT) is an intramembrane region (helical). Residues 374–379 (TVGYGD) carry the Selectivity filter motif. Residues 374–381 (TVGYGDVV) lie within the membrane without spanning it. At 382–388 (PGTTAGK) the chain is on the extracellular side. The helical transmembrane segment at 389–417 (LTASACILAGILVVVLPITLIFNKFSHFY) threads the bilayer. The Cytoplasmic segment spans residues 418 to 477 (RRQKQLESAMRSCDFGDGMKEVPSVNLRDYYAHKVKSLMASLTNMSRSSPSELSLNDSLR).

Belongs to the potassium channel family. S (TC 1.A.1.2) subfamily. Kv9.2/KCNS2 sub-subfamily. As to quaternary structure, heterotetramer with KCNB1 and KCNB2. Does not form homomultimers.

Its subcellular location is the cell membrane. Its function is as follows. Potassium channel regulatory subunit that modulate the delayed rectifier voltage-gated potassium channel activity of KCNB1 and KCNB2 by altering their kinetics, expression levels, and shifting the half-inactivation potential to more polarized values. While it does not form functional channels on its own, it can form functional heterotetrameric channels with KCNB1 and KCNB2. Each regulatory subunit has unique regulatory properties that can lead to extensive inhibition, significant changes in kinetics, and/or substantial shifts in the voltage dependencies of the inactivation process. The polypeptide is Delayed-rectifier potassium channel regulatory subunit KCNS2 (Homo sapiens (Human)).